A 337-amino-acid polypeptide reads, in one-letter code: tRNA N6-adenosine threonylcarbamoyltransferase (337 aa).

Fe cation-binding residues include His111 and His115. Residues 134-138 (LVSGG), Asp167, Gly180, and Asn272 each bind substrate. Position 300 (Asp300) interacts with Fe cation.

Belongs to the KAE1 / TsaD family. The cofactor is Fe(2+).

It is found in the cytoplasm. It catalyses the reaction L-threonylcarbamoyladenylate + adenosine(37) in tRNA = N(6)-L-threonylcarbamoyladenosine(37) in tRNA + AMP + H(+). In terms of biological role, required for the formation of a threonylcarbamoyl group on adenosine at position 37 (t(6)A37) in tRNAs that read codons beginning with adenine. Is involved in the transfer of the threonylcarbamoyl moiety of threonylcarbamoyl-AMP (TC-AMP) to the N6 group of A37, together with TsaE and TsaB. TsaD likely plays a direct catalytic role in this reaction. This is tRNA N6-adenosine threonylcarbamoyltransferase from Pseudoalteromonas translucida (strain TAC 125).